The primary structure comprises 86 residues: MLSQKPKKKHNFLNHGLSLNLVIKPYLALEGSVAFPAENGVQDTESTQEKRETGDEENSAKFPVGRRDFDTLSCMLGRVYQSCWQV.

Residues 31-49 (GSVAFPAENGVQDTESTQE) form an NGE-like region. The segment at 38-62 (ENGVQDTESTQEKRETGDEENSAKF) is disordered. The interval 52-64 (ETGDEENSAKFPV) is NEI-like. The interval 68–86 (DFDTLSCMLGRVYQSCWQV) is melanin-concentrating hormone-like.

This sequence belongs to the melanin-concentrating hormone family. As to expression, expressed in testis and brain.

This is Putative pro-MCH-like protein 1 (PMCHL1) from Homo sapiens (Human).